Reading from the N-terminus, the 369-residue chain is N-succinylamino acid racemase (369 aa).

K163 acts as the Proton donor in catalysis. The Mg(2+) site is built by D188, E213, and D238. The active-site Proton acceptor is K262.

It belongs to the mandelate racemase/muconate lactonizing enzyme family. MenC type 2 subfamily. As to quaternary structure, homooctamer. Tetramer of dimers. A divalent metal cation is required as a cofactor.

The catalysed reaction is (1R,6R)-6-hydroxy-2-succinyl-cyclohexa-2,4-diene-1-carboxylate = 2-succinylbenzoate + H2O. Its function is as follows. Acts as a N-succinylamino acid racemase (NSAR) that catalyzes the racemization of N-succinyl-L-phenylglycine. Also converts 2-succinyl-6-hydroxy-2,4-cyclohexadiene-1-carboxylate (SHCHC) to 2-succinylbenzoate (OSB). Catalyzes both N-succinylamino acid racemization and OSB synthesis at equivalent rates. However, NSAR activity is probably the protein's biological function, because menaquinone biosynthesis genes are missing in this species. This Thermus thermophilus (strain ATCC 27634 / DSM 579 / HB8) protein is N-succinylamino acid racemase.